We begin with the raw amino-acid sequence, 89 residues long: Large ribosomal subunit protein eL34 (89 aa).

This sequence belongs to the eukaryotic ribosomal protein eL34 family.

This is Large ribosomal subunit protein eL34 from Methanococcus vannielii (strain ATCC 35089 / DSM 1224 / JCM 13029 / OCM 148 / SB).